The sequence spans 138 residues: Basic phospholipase A2 Cll-N6 (138 aa).

The signal sequence occupies residues 1-16 (MRTFWIVAVLLVGVEG). Disulfide bonds link C42/C131, C44/C60, C59/C111, C65/C138, C66/C104, C73/C97, and C91/C102. Positions 43, 45, and 47 each coordinate Ca(2+). The active site involves H63. D64 lines the Ca(2+) pocket. D105 is a catalytic residue.

In terms of assembly, monomer. It depends on Ca(2+) as a cofactor. In terms of tissue distribution, expressed by the venom gland.

It is found in the secreted. It catalyses the reaction a 1,2-diacyl-sn-glycero-3-phosphocholine + H2O = a 1-acyl-sn-glycero-3-phosphocholine + a fatty acid + H(+). In terms of biological role, snake venom phospholipase A2 (PLA2) that shows myotoxic activities. PLA2 catalyzes the calcium-dependent hydrolysis of the 2-acyl groups in 3-sn-phosphoglycerides. The chain is Basic phospholipase A2 Cll-N6 from Crotalus lepidus lepidus (Mottled rock rattlesnake).